Reading from the N-terminus, the 303-residue chain is 2-dehydropantoate 2-reductase (303 aa).

Residues 7–12 (GCGALG), asparagine 98, and alanine 122 contribute to the NADP(+) site. Asparagine 98 is a substrate binding site. Catalysis depends on lysine 176, which acts as the Proton donor. Substrate-binding residues include asparagine 180, asparagine 184, asparagine 194, and serine 244. Glutamate 256 is a binding site for NADP(+).

It belongs to the ketopantoate reductase family.

The protein localises to the cytoplasm. The catalysed reaction is (R)-pantoate + NADP(+) = 2-dehydropantoate + NADPH + H(+). It participates in cofactor biosynthesis; (R)-pantothenate biosynthesis; (R)-pantoate from 3-methyl-2-oxobutanoate: step 2/2. Its function is as follows. Catalyzes the NADPH-dependent reduction of ketopantoate into pantoic acid. In Yersinia pestis, this protein is 2-dehydropantoate 2-reductase (panE).